A 156-amino-acid polypeptide reads, in one-letter code: ATP synthase subunit b 1 (156 aa).

A helical transmembrane segment spans residues 7–29; it reads LLGQAISFALFVWFCMKYVWPPL.

The protein belongs to the ATPase B chain family. As to quaternary structure, F-type ATPases have 2 components, F(1) - the catalytic core - and F(0) - the membrane proton channel. F(1) has five subunits: alpha(3), beta(3), gamma(1), delta(1), epsilon(1). F(0) has three main subunits: a(1), b(2) and c(10-14). The alpha and beta chains form an alternating ring which encloses part of the gamma chain. F(1) is attached to F(0) by a central stalk formed by the gamma and epsilon chains, while a peripheral stalk is formed by the delta and b chains.

It is found in the cell inner membrane. Its function is as follows. F(1)F(0) ATP synthase produces ATP from ADP in the presence of a proton or sodium gradient. F-type ATPases consist of two structural domains, F(1) containing the extramembraneous catalytic core and F(0) containing the membrane proton channel, linked together by a central stalk and a peripheral stalk. During catalysis, ATP synthesis in the catalytic domain of F(1) is coupled via a rotary mechanism of the central stalk subunits to proton translocation. In terms of biological role, component of the F(0) channel, it forms part of the peripheral stalk, linking F(1) to F(0). The polypeptide is ATP synthase subunit b 1 (Vibrio campbellii (strain ATCC BAA-1116)).